We begin with the raw amino-acid sequence, 103 residues long: Large ribosomal subunit protein bL21 (103 aa).

Belongs to the bacterial ribosomal protein bL21 family. Part of the 50S ribosomal subunit. Contacts protein L20.

This protein binds to 23S rRNA in the presence of protein L20. This Colwellia psychrerythraea (strain 34H / ATCC BAA-681) (Vibrio psychroerythus) protein is Large ribosomal subunit protein bL21.